We begin with the raw amino-acid sequence, 141 residues long: MLTAEDKKLITQLWEKVAGHQDDFGNEALQRMFVTYPQTKTYFPHFDLHPGSEQVRGHGKKVAAALGNAVKSLDNISQALSELSNLHAYNLRVDPVNFKLLAQCFQVVLAAHLGKDYTPDMHAAFDKFLSAVAAVLAEKYR.

The Globin domain maps to 1-141 (MLTAEDKKLI…VAAVLAEKYR (141 aa)). Heme b-binding residues include His58 and His87.

Heterotetramer of two alpha-D chains and two beta chains. Red blood cells.

Its function is as follows. Involved in oxygen transport from the lung to the various peripheral tissues. This is Hemoglobin subunit alpha-D (HBAD) from Aythya fuligula (Tufted duck).